A 355-amino-acid chain; its full sequence is tRNA-specific 2-thiouridylase MnmA (355 aa).

Residues 8 to 15 (GMSGGVDS) and Met-34 contribute to the ATP site. Cys-103 functions as the Nucleophile in the catalytic mechanism. A disulfide bond links Cys-103 and Cys-199. Gly-127 is an ATP binding site. The interaction with tRNA stretch occupies residues 149 to 151 (KDQ). Cys-199 (cysteine persulfide intermediate) is an active-site residue. Residues 305–306 (RY) form an interaction with tRNA region.

Belongs to the MnmA/TRMU family.

It is found in the cytoplasm. The catalysed reaction is S-sulfanyl-L-cysteinyl-[protein] + uridine(34) in tRNA + AH2 + ATP = 2-thiouridine(34) in tRNA + L-cysteinyl-[protein] + A + AMP + diphosphate + H(+). Functionally, catalyzes the 2-thiolation of uridine at the wobble position (U34) of tRNA, leading to the formation of s(2)U34. This chain is tRNA-specific 2-thiouridylase MnmA, found in Clostridium acetobutylicum (strain ATCC 824 / DSM 792 / JCM 1419 / IAM 19013 / LMG 5710 / NBRC 13948 / NRRL B-527 / VKM B-1787 / 2291 / W).